The sequence spans 127 residues: Small ribosomal subunit protein uS12 (127 aa).

Residues isoleucine 8–proline 28 form a disordered region. Aspartate 89 bears the 3-methylthioaspartic acid mark. The disordered stretch occupies residues leucine 102 to lysine 127. Over residues glycine 113–lysine 127 the composition is skewed to basic residues.

This sequence belongs to the universal ribosomal protein uS12 family. Part of the 30S ribosomal subunit. Contacts proteins S8 and S17. May interact with IF1 in the 30S initiation complex.

Its function is as follows. With S4 and S5 plays an important role in translational accuracy. In terms of biological role, interacts with and stabilizes bases of the 16S rRNA that are involved in tRNA selection in the A site and with the mRNA backbone. Located at the interface of the 30S and 50S subunits, it traverses the body of the 30S subunit contacting proteins on the other side and probably holding the rRNA structure together. The combined cluster of proteins S8, S12 and S17 appears to hold together the shoulder and platform of the 30S subunit. The chain is Small ribosomal subunit protein uS12 from Nostoc sp. (strain PCC 7120 / SAG 25.82 / UTEX 2576).